The chain runs to 199 residues: NADH-quinone oxidoreductase subunit C (199 aa).

It belongs to the complex I 30 kDa subunit family. In terms of assembly, NDH-1 is composed of 14 different subunits. Subunits NuoB, C, D, E, F, and G constitute the peripheral sector of the complex.

The protein localises to the cell inner membrane. It carries out the reaction a quinone + NADH + 5 H(+)(in) = a quinol + NAD(+) + 4 H(+)(out). Its function is as follows. NDH-1 shuttles electrons from NADH, via FMN and iron-sulfur (Fe-S) centers, to quinones in the respiratory chain. The immediate electron acceptor for the enzyme in this species is believed to be ubiquinone. Couples the redox reaction to proton translocation (for every two electrons transferred, four hydrogen ions are translocated across the cytoplasmic membrane), and thus conserves the redox energy in a proton gradient. The polypeptide is NADH-quinone oxidoreductase subunit C (Cupriavidus taiwanensis (strain DSM 17343 / BCRC 17206 / CCUG 44338 / CIP 107171 / LMG 19424 / R1) (Ralstonia taiwanensis (strain LMG 19424))).